Reading from the N-terminus, the 411-residue chain is 6-hydroxytryprostatin B O-methyltransferase (411 aa).

Asp-270 is a binding site for S-adenosyl-L-methionine. His-313 serves as the catalytic Proton acceptor.

Belongs to the class I-like SAM-binding methyltransferase superfamily. Cation-independent O-methyltransferase family. In terms of assembly, homodimer.

The enzyme catalyses 6-hydroxytryprostatin B + S-adenosyl-L-methionine = tryprostatin A + S-adenosyl-L-homocysteine + H(+). Its pathway is alkaloid biosynthesis. In terms of biological role, 6-hydroxytryprostatin B O-methyltransferase; part of the gene cluster that mediates the biosynthesis of fumitremorgins, indole alkaloids that carry not only intriguing chemical structures, but also interesting biological and pharmacological activities. The biosynthesis of fumitremorgin-type alkaloids begins by condensation of the two amino acids L-tryptophan and L-proline to brevianamide F, catalyzed by the non-ribosomal peptide synthetase ftmPS/ftmA. Brevianamide F is then prenylated by the prenyltransferase ftmPT1/ftmB in the presence of dimethylallyl diphosphate, resulting in the formation of tryprostatin B. The three cytochrome P450 monooxygenases, ftmP450-1/ftmC, ftmP450-2/ftmE and ftmP450-3/FtmG, are responsible for the conversion of tryprostatin B to 6-hydroxytryprostatin B, tryprostatin A to fumitremorgin C and fumitremorgin C to 12,13-dihydroxyfumitremorgin C, respectively. The putative methyltransferase ftmMT/ftmD is expected for the conversion of 6-hydroxytryprostatin B to tryprostatin A. FtmPT2/FtmH catalyzes the prenylation of 12,13-dihydroxyfumitre-morgin C in the presence of dimethylallyl diphosphate, resulting in the formation of fumitremorgin B. Fumitremorgin B is further converted to verruculogen by ftmOx1/ftmF via the insertion of an endoperoxide bond between the two prenyl moieties. Finally, verruculogen is further converted to fumitremorgin A by the verruculogen prenyltransferase ftmPT3. This Neosartorya fischeri (strain ATCC 1020 / DSM 3700 / CBS 544.65 / FGSC A1164 / JCM 1740 / NRRL 181 / WB 181) (Aspergillus fischerianus) protein is 6-hydroxytryprostatin B O-methyltransferase.